A 286-amino-acid polypeptide reads, in one-letter code: UDP-3-O-acyl-N-acetylglucosamine deacetylase (286 aa).

The Zn(2+) site is built by H79, H237, and D241. H264 serves as the catalytic Proton donor.

This sequence belongs to the LpxC family. Zn(2+) is required as a cofactor.

The enzyme catalyses a UDP-3-O-[(3R)-3-hydroxyacyl]-N-acetyl-alpha-D-glucosamine + H2O = a UDP-3-O-[(3R)-3-hydroxyacyl]-alpha-D-glucosamine + acetate. Its pathway is glycolipid biosynthesis; lipid IV(A) biosynthesis; lipid IV(A) from (3R)-3-hydroxytetradecanoyl-[acyl-carrier-protein] and UDP-N-acetyl-alpha-D-glucosamine: step 2/6. In terms of biological role, catalyzes the hydrolysis of UDP-3-O-myristoyl-N-acetylglucosamine to form UDP-3-O-myristoylglucosamine and acetate, the committed step in lipid A biosynthesis. The polypeptide is UDP-3-O-acyl-N-acetylglucosamine deacetylase (Chlamydia muridarum (strain MoPn / Nigg)).